Reading from the N-terminus, the 196-residue chain is Alpha-crystallin A chain (196 aa).

Residue Met-1 is modified to N-acetylmethionine. The interval 1 to 63 (MDVTIQHPWF…RTVLDSGISE (63 aa)) is required for complex formation with BFSP1 and BFSP2. Gln-6 bears the Deamidated glutamine; partial mark. Ser-45 bears the Phosphoserine mark. Deamidated glutamine; partial is present on Gln-50. In terms of domain architecture, sHSP spans 76–185 (HAGNPKNNPG…GHSERAIPVS (110 aa)). 2 positions are modified to N6-acetyllysine: Lys-93 and Lys-122. His-123 contacts Zn(2+). Asn-124 bears the Deamidated asparagine; partial mark. Positions 125 and 130 each coordinate Zn(2+). Phosphoserine is present on Ser-145. Asn-146 bears the Deamidated asparagine; partial mark. The segment at 168 to 196 (KVQSGLDAGHSERAIPVSREEKPSSAPSS) is disordered. The residue at position 170 (Gln-170) is a Deamidated glutamine; partial. The segment covering 176 to 190 (GHSERAIPVSREEKP) has biased composition (basic and acidic residues). His-177 lines the Zn(2+) pocket. Residue Ser-185 is glycosylated (O-linked (GlcNAc) serine).

This sequence belongs to the small heat shock protein (HSP20) family. As to quaternary structure, heteropolymer composed of three CRYAA and one CRYAB subunits. Inter-subunit bridging via zinc ions enhances stability, which is crucial as there is no protein turn over in the lens. Can also form homodimers and homotetramers (dimers of dimers) which serve as the building blocks of homooligomers. Within homooligomers, the zinc-binding motif is created from residues of 3 different molecules. His-123 and Glu-125 from one molecule are ligands of the zinc ion, and His-130 and His-177 residues from additional molecules complete the site with tetrahedral coordination geometry. Part of a complex required for lens intermediate filament formation composed of BFSP1, BFSP2 and CRYAA. Acetylation at Lys-93 may increase chaperone activity. Post-translationally, undergoes age-dependent proteolytical cleavage at the C-terminus. Cleavage by m-calpain produces specifically alpha-crystallin A(1-162), cleavage by Capn3/Lp82 produces specifically alpha-crystallin A(1-168) which is the major truncated form during normal maturation and induced cataract formation. In terms of tissue distribution, highly expressed in eye lens. Also expressed in non-lenticular tissues such as brain, spleen, liver, lung, skin, small intestine and a several epithelial and fibroblast cell lines with highest levels in spleen.

It localises to the cytoplasm. It is found in the nucleus. Contributes to the transparency and refractive index of the lens. Acts as a chaperone, preventing aggregation of various proteins under a wide range of stress conditions. Required for the correct formation of lens intermediate filaments as part of a complex composed of BFSP1, BFSP2 and CRYAA. Its function is as follows. Inhibits bacterial growth in the lens. The sequence is that of Alpha-crystallin A chain (Cryaa) from Rattus norvegicus (Rat).